Consider the following 223-residue polypeptide: Family of serine hydrolases 2 (223 aa).

Residues Ser-110, Asp-174, and His-203 each act as charge relay system in the active site.

Belongs to the AB hydrolase 3 family.

Its subcellular location is the cytoplasm. Serine hydrolase of unknown specificity. This is Family of serine hydrolases 2 (FSH2) from Saccharomyces cerevisiae (strain ATCC 204508 / S288c) (Baker's yeast).